The following is a 331-amino-acid chain: Laforin (331 aa).

Positions 1 to 124 (MRFRFGVVVP…NNLVDGVYCL (124 aa)) constitute a CBM20 domain. A Phosphoserine; by AMPK modification is found at Ser-25. Substrate-binding positions include Trp-32, Lys-87, 103-107 (GPHHD), Asp-197, Asp-235, and Arg-241. The region spanning 156 to 323 (HYSRILPNIW…QEDFFQKFGK (168 aa)) is the Tyrosine-protein phosphatase domain. Cys-266 serves as the catalytic Phosphocysteine intermediate. A Glucan phosphatase signature motif CXAGXGR motif is present at residues 266-272 (CNAGVGR). Residues 267 to 272 (NAGVGR) and Tyr-304 contribute to the substrate site.

This sequence belongs to the protein-tyrosine phosphatase family. In terms of assembly, homodimer. Interacts with itself. Interacts with PPP1R3B, PPP1R3C, PPP1R3D, HIRIP5, and EPM2AIP1. Binds glycogen and Lafora bodies. Interacts with NHLRC1/malin (via the NHL repeats). Forms a complex with NHLRC1/malin and HSP70. Interacts with PPP1R3D; in the presence of NHLC1/malin the interaction leads to ubiquitination and autophagic degradation of PPP1R3D. Interacts (via the phosphatase domain) with MAPT/Tau; the interaction dephosphorylates MAPT. Isoform 1 and isoform 2 interact to form a heterodimeric complex that lacks phosphatase activity (in vitro). Active phosphatase isoform 7 and isoform 1 interact with each other, but give rise to lower phosphatase activity than isoform 1 or isoform 7 by themselves (in vitro). Active phosphatase isoform 7 and inactive isoform 2 interact with each other, but give rise to lower phosphatase activity than isoform 7 by itself (in vitro). Interacts with PRDM8. Post-translationally, polyubiquitinated by NHLRC1/malin. Phosphorylation on Ser-25 by AMPK affects the phosphatase activity of the enzyme and its ability to homodimerize and interact with NHLRC1, PPP1R3C or PRKAA2. In terms of tissue distribution, expressed in heart, skeletal muscle, kidney, pancreas and brain. Isoform 4 is also expressed in the placenta.

The protein resides in the cytoplasm. The protein localises to the endoplasmic reticulum membrane. It is found in the cell membrane. Its subcellular location is the nucleus. The catalysed reaction is O-phospho-L-tyrosyl-[protein] + H2O = L-tyrosyl-[protein] + phosphate. It catalyses the reaction O-phospho-L-seryl-[protein] + H2O = L-seryl-[protein] + phosphate. It carries out the reaction O-phospho-L-threonyl-[protein] + H2O = L-threonyl-[protein] + phosphate. In terms of biological role, plays an important role in preventing glycogen hyperphosphorylation and the formation of insoluble aggregates, via its activity as glycogen phosphatase, and by promoting the ubiquitination of proteins involved in glycogen metabolism via its interaction with the E3 ubiquitin ligase NHLRC1/malin. Shows strong phosphatase activity towards complex carbohydrates in vitro, avoiding glycogen hyperphosphorylation which is associated with reduced branching and formation of insoluble aggregates. Dephosphorylates phosphotyrosine and synthetic substrates, such as para-nitrophenylphosphate (pNPP), and has low activity with phosphoserine and phosphothreonine substrates (in vitro). Has been shown to dephosphorylate MAPT. Forms a complex with NHLRC1/malin and HSP70, which suppresses the cellular toxicity of misfolded proteins by promoting their degradation through the ubiquitin-proteasome system (UPS). Acts as a scaffold protein to facilitate PPP1R3C/PTG ubiquitination by NHLRC1/malin. Also promotes proteasome-independent protein degradation through the macroautophagy pathway. Does not bind to glycogen. Lacks phosphatase activity and might function as a dominant-negative regulator for the phosphatase activity of isoform 1 and isoform 7. Functionally, has phosphatase activity (in vitro). This chain is Laforin (EPM2A), found in Homo sapiens (Human).